We begin with the raw amino-acid sequence, 414 residues long: Patatin-like protein 1 (414 aa).

One can recognise a PNPLA domain in the interval 20–224 (LAIDGGGIRG…AANNPTMVAM (205 aa)). A GXGXXG motif is present at residues 24 to 29 (GGGIRG). The short motif at 62–66 (GTSTG) is the GXSXG element. The active-site Nucleophile is the serine 64. Residue aspartate 211 is the Proton acceptor of the active site. The DGA/G signature appears at 211 to 213 (DGG).

This sequence belongs to the patatin family.

Functionally, possesses non-specific lipolytic acyl hydrolase (LAH) activity. Hydrolyzes phospholipids as well as galactolipids. May play a role in disease resistance. This is Patatin-like protein 1 (PLP1) from Oryza sativa subsp. indica (Rice).